Here is a 128-residue protein sequence, read N- to C-terminus: Large ribosomal subunit protein uL22 (128 aa).

The protein belongs to the universal ribosomal protein uL22 family. Part of the 50S ribosomal subunit.

This protein binds specifically to 23S rRNA; its binding is stimulated by other ribosomal proteins, e.g. L4, L17, and L20. It is important during the early stages of 50S assembly. It makes multiple contacts with different domains of the 23S rRNA in the assembled 50S subunit and ribosome. Functionally, the globular domain of the protein is located near the polypeptide exit tunnel on the outside of the subunit, while an extended beta-hairpin is found that lines the wall of the exit tunnel in the center of the 70S ribosome. This Prochlorococcus marinus (strain MIT 9312) protein is Large ribosomal subunit protein uL22.